A 414-amino-acid polypeptide reads, in one-letter code: 2,3-bisphosphoglycerate-independent phosphoglycerate mutase (414 aa).

The protein belongs to the BPG-independent phosphoglycerate mutase family. A-PGAM subfamily.

It carries out the reaction (2R)-2-phosphoglycerate = (2R)-3-phosphoglycerate. Its pathway is carbohydrate degradation; glycolysis; pyruvate from D-glyceraldehyde 3-phosphate: step 3/5. In terms of biological role, catalyzes the interconversion of 2-phosphoglycerate and 3-phosphoglycerate. The protein is 2,3-bisphosphoglycerate-independent phosphoglycerate mutase of Saccharolobus islandicus (strain M.14.25 / Kamchatka #1) (Sulfolobus islandicus).